The following is a 545-amino-acid chain: MKPLKLKRLIMENNKSHATNLSLGGPFQGNCMPINQYFSKNQPNRGSSSSEKRSSLLPLWESKNAADGFSIVSHNVLLDGATTILNLNSFFECETGNYHTFCPISCVAWLYQKIEDSFFLVIGTKTCGYFLQNALGVMIFAEPRYAMAELEESDISAQLNDYKELKRLCLQIKQDRNPSVIVWIGTCTTEIIKMDLEGMAPRLETEIGIPIVVARANGLDYAFTQGEDTVLSAMALASLKKDVPFLVGNTGLTNNQLLLEKSTSSVNGTDGKELLKKSLVLFGSVPSTVTTQLTLELKKEGINVSGWLPSANYKDLPTFNKDTLVCGINPFLSRTATTLMRRSKCTLICAPFPIGPDGTRVWIEKICGAFGINPSLNPITGNTNLYDREQKIFNGLEDYLKLLRGKSVFFMGDNLLEISLARFLTRCGMIVYEIGIPYLDKRFQAAELALLEQTCKEMNVPMPRIVEKPDNYYQIRRIRELKPDLTITGMAHANPLEARGITTKWSVEFTFAQIHGFTNTREILELVTQPLRRNLMSNQSVNAIS.

[4Fe-4S] cluster contacts are provided by C102, C127, and C187.

Belongs to the BchN/ChlN family. In terms of assembly, protochlorophyllide reductase is composed of three subunits; ChlL, ChlN and ChlB. Forms a heterotetramer of two ChlB and two ChlN subunits. [4Fe-4S] cluster is required as a cofactor.

It localises to the plastid. It is found in the chloroplast. It carries out the reaction chlorophyllide a + oxidized 2[4Fe-4S]-[ferredoxin] + 2 ADP + 2 phosphate = protochlorophyllide a + reduced 2[4Fe-4S]-[ferredoxin] + 2 ATP + 2 H2O. The protein operates within porphyrin-containing compound metabolism; chlorophyll biosynthesis (light-independent). Component of the dark-operative protochlorophyllide reductase (DPOR) that uses Mg-ATP and reduced ferredoxin to reduce ring D of protochlorophyllide (Pchlide) to form chlorophyllide a (Chlide). This reaction is light-independent. The NB-protein (ChlN-ChlB) is the catalytic component of the complex. This chain is Light-independent protochlorophyllide reductase subunit N, found in Chlamydomonas reinhardtii (Chlamydomonas smithii).